A 592-amino-acid polypeptide reads, in one-letter code: Guanylate-binding protein 1 (592 aa).

Residues 1-311 form a GTPase domain (Globular) region; it reads MASEIHMTGP…NAISSGDLPC (311 aa). The GB1/RHD3-type G domain maps to 35–278; the sequence is TQPMVVVAIV…FCSYIFSNSK (244 aa). GTP contacts are provided by residues 45-52, 67-69, and 97-101; these read GLYRTGKS, LGS, and DTEGL. Residue S156 is modified to Phosphoserine. A Cysteine methyl ester modification is found at C589. A lipid anchor (S-farnesyl cysteine) is attached at C589. T590 carries the phosphothreonine modification. The propeptide at 590–592 is removed in mature form; the sequence is TIS.

The protein belongs to the TRAFAC class dynamin-like GTPase superfamily. GB1/RHD3 GTPase family. GB1 subfamily. As to quaternary structure, homodimer; homodimerization occurs upon GTP-binding and is required for the second hydrolysis step from GDP to GMP. Undergoes conformational changes and oligomerization upon GTP-binding and hydrolysis. Heterodimer with other family members, including GBP2, GBP3, GBP4 and GBP5. Dimerization regulates subcellular location to membranous structures. Interacts with SQSTM1. Interacts (when phosphorylated) with 14-3-3 protein sigma (SFN); leading to GBP1 retention in the cytosol and inactivation. In terms of processing, isoprenylation is required for proper subcellular location. Phosphorylated at Ser-156 by PIM1 in absence of infection, inhibits GBP1: phosphorylation promotes interaction with 14-3-3 protein sigma (SFN), leading to GBP1 retention in the cytosol. Dephosphorylated in response to infection, liberating GBP1.

Its subcellular location is the cytoplasmic vesicle membrane. It localises to the golgi apparatus membrane. The protein localises to the cell membrane. The protein resides in the cytoplasm. It is found in the cytosol. Its subcellular location is the secreted. The catalysed reaction is GTP + H2O = GDP + phosphate + H(+). It carries out the reaction GDP + H2O = GMP + phosphate + H(+). Interferon (IFN)-inducible GTPase that plays important roles in innate immunity against a diverse range of bacterial, viral and protozoan pathogens. Hydrolyzes GTP to GMP in two consecutive cleavage reactions: GTP is first hydrolyzed to GDP and then to GMP in a processive manner. Following infection, recruited to the pathogen-containing vacuoles or vacuole-escaped bacteria and promotes both inflammasome assembly and autophagy. Acts as a positive regulator of inflammasome assembly by facilitating the detection of inflammasome ligands from pathogens. Involved in the lysis of pathogen-containing vacuoles, releasing pathogens into the cytosol. Following pathogen release in the cytosol, forms a protein coat in a GTPase-dependent manner that encapsulates pathogens and promotes the detection of ligands by pattern recognition receptors. Plays a key role in inflammasome assembly in response to infection by Gram-negative bacteria: following pathogen release in the cytosol, forms a protein coat that encapsulates Gram-negative bacteria and directly binds to lipopolysaccharide (LPS), disrupting the O-antigen barrier and unmasking lipid A that is that detected by the non-canonical inflammasome effector CASP4/CASP11. Also promotes recruitment of proteins that mediate bacterial cytolysis, leading to release double-stranded DNA (dsDNA) that activates the AIM2 inflammasome. Involved in autophagy by regulating bacteriolytic peptide generation via its interaction with ubiquitin-binding protein SQSTM1, which delivers monoubiquitinated proteins to autolysosomes for the generation of bacteriolytic peptides. Confers protection to several pathogens, including the bacterial pathogens L.monocytogenes and M.bovis BCG as well as the protozoan pathogen T.gondii. Exhibits antiviral activity against influenza virus. This chain is Guanylate-binding protein 1 (GBP1), found in Pongo abelii (Sumatran orangutan).